The chain runs to 780 residues: Tricorn protease-interacting factor F3 (780 aa).

Residues Glu101 and 230–234 contribute to the substrate site; that span reads GAMEN. His265 lines the Zn(2+) pocket. Catalysis depends on Glu266, which acts as the Proton acceptor. Zn(2+) contacts are provided by His269 and Glu288.

It belongs to the peptidase M1 family. Part of the tricorn proteolytic complex. Zn(2+) is required as a cofactor.

Its subcellular location is the cytoplasm. Its function is as follows. Proteases F1, F2 and F3 degrade oligopeptides produced by Tricorn (themselves probably produced by the proteasome), yielding free amino acids. The sequence is that of Tricorn protease-interacting factor F3 (trf3) from Thermoplasma acidophilum (strain ATCC 25905 / DSM 1728 / JCM 9062 / NBRC 15155 / AMRC-C165).